The primary structure comprises 266 residues: Syntaxin-71 (266 aa).

The Cytoplasmic portion of the chain corresponds to 1–243; sequence MTVIDILTRV…TVNQLRSSRN (243 aa). Residue S12 is modified to Phosphoserine. Positions 44–87 form a coiled coil; that stretch reads ETQIETALEKAELVTKEKNRAAAVAMNAEIRRTKARLSEEVPKL. Residues 122 to 146 are disordered; sequence DGTAGGPKSTSAWTPSSTTSRPDIK. Residues 130–141 show a composition bias toward low complexity; sequence STSAWTPSSTTS. One can recognise a t-SNARE coiled-coil homology domain in the interval 172 to 234; it reads EMRKIKQEQG…KNTNVRLKDT (63 aa). Residues 244–264 traverse the membrane as a helical; Anchor for type IV membrane protein segment; it reads FCIDIVLLCIVLGIAAYLYNV. At 265-266 the chain is on the vesicular side; it reads LK.

Belongs to the syntaxin family. In terms of assembly, part of the t-SNARE complex. In terms of tissue distribution, expressed in root, leaf, stem, flower and silique.

It localises to the membrane. Its function is as follows. Vesicle trafficking protein that functions in the secretory pathway. This Arabidopsis thaliana (Mouse-ear cress) protein is Syntaxin-71 (SYP71).